Reading from the N-terminus, the 475-residue chain is ATP synthase subunit beta (475 aa).

Residue 155 to 162 (GGAGVGKT) participates in ATP binding.

It belongs to the ATPase alpha/beta chains family. In terms of assembly, F-type ATPases have 2 components, CF(1) - the catalytic core - and CF(0) - the membrane proton channel. CF(1) has five subunits: alpha(3), beta(3), gamma(1), delta(1), epsilon(1). CF(0) has three main subunits: a(1), b(2) and c(9-12). The alpha and beta chains form an alternating ring which encloses part of the gamma chain. CF(1) is attached to CF(0) by a central stalk formed by the gamma and epsilon chains, while a peripheral stalk is formed by the delta and b chains.

Its subcellular location is the cell inner membrane. It carries out the reaction ATP + H2O + 4 H(+)(in) = ADP + phosphate + 5 H(+)(out). Produces ATP from ADP in the presence of a proton gradient across the membrane. The catalytic sites are hosted primarily by the beta subunits. This is ATP synthase subunit beta from Rhizobium etli (strain ATCC 51251 / DSM 11541 / JCM 21823 / NBRC 15573 / CFN 42).